Reading from the N-terminus, the 39-residue chain is Large ribosomal subunit protein bL36 (39 aa).

Belongs to the bacterial ribosomal protein bL36 family.

The polypeptide is Large ribosomal subunit protein bL36 (Oenococcus oeni (strain ATCC BAA-331 / PSU-1)).